The following is a 448-amino-acid chain: Squalene synthase ERG9 (448 aa).

A helical transmembrane segment spans residues Arg-420–Leu-440.

The protein belongs to the phytoene/squalene synthase family. Requires Mg(2+) as cofactor.

The protein resides in the endoplasmic reticulum membrane. The protein localises to the microsome. It catalyses the reaction 2 (2E,6E)-farnesyl diphosphate + NADPH + H(+) = squalene + 2 diphosphate + NADP(+). It carries out the reaction 2 (2E,6E)-farnesyl diphosphate + NADH + H(+) = squalene + 2 diphosphate + NAD(+). Its pathway is terpene metabolism; lanosterol biosynthesis; lanosterol from farnesyl diphosphate: step 1/3. Its function is as follows. Squalene synthase; part of the third module of ergosterol biosynthesis pathway that includes the late steps of the pathway. ERG9 produces squalene from 2 farnesyl pyrophosphate moieties. The third module or late pathway involves the ergosterol synthesis itself through consecutive reactions that mainly occur in the endoplasmic reticulum (ER) membrane. Firstly, the squalene synthase ERG9 catalyzes the condensation of 2 farnesyl pyrophosphate moieties to form squalene, which is the precursor of all steroids. Squalene synthase is crucial for balancing the incorporation of farnesyl diphosphate (FPP) into sterol and nonsterol isoprene synthesis. Secondly, the squalene epoxidase ERG1 catalyzes the stereospecific oxidation of squalene to (S)-2,3-epoxysqualene, which is considered to be a rate-limiting enzyme in steroid biosynthesis. Then, the lanosterol synthase ERG7 catalyzes the cyclization of (S)-2,3 oxidosqualene to lanosterol, a reaction that forms the sterol core. In the next steps, lanosterol is transformed to zymosterol through a complex process involving various demethylation, reduction and desaturation reactions. The lanosterol 14-alpha-demethylase ERG11 (also known as CYP51) catalyzes C14-demethylation of lanosterol to produce 4,4'-dimethyl cholesta-8,14,24-triene-3-beta-ol, which is critical for ergosterol biosynthesis. The C-14 reductase ERG24 reduces the C14=C15 double bond of 4,4-dimethyl-cholesta-8,14,24-trienol to produce 4,4-dimethyl-cholesta-8,24-dienol. 4,4-dimethyl-cholesta-8,24-dienol is substrate of the C-4 demethylation complex ERG25-ERG26-ERG27 in which ERG25 catalyzes the three-step monooxygenation required for the demethylation of 4,4-dimethyl and 4alpha-methylsterols, ERG26 catalyzes the oxidative decarboxylation that results in a reduction of the 3-beta-hydroxy group at the C-3 carbon to an oxo group, and ERG27 is responsible for the reduction of the keto group on the C-3. ERG28 has a role as a scaffold to help anchor ERG25, ERG26 and ERG27 to the endoplasmic reticulum and ERG29 regulates the activity of the iron-containing C4-methylsterol oxidase ERG25. Then, the sterol 24-C-methyltransferase ERG6 catalyzes the methyl transfer from S-adenosyl-methionine to the C-24 of zymosterol to form fecosterol. The C-8 sterol isomerase ERG2 catalyzes the reaction which results in unsaturation at C-7 in the B ring of sterols and thus converts fecosterol to episterol. The sterol-C5-desaturase ERG3 then catalyzes the introduction of a C-5 double bond in the B ring to produce 5-dehydroepisterol. The C-22 sterol desaturase ERG5 further converts 5-dehydroepisterol into ergosta-5,7,22,24(28)-tetraen-3beta-ol by forming the C-22(23) double bond in the sterol side chain. Finally, ergosta-5,7,22,24(28)-tetraen-3beta-ol is substrate of the C-24(28) sterol reductase ERG4 to produce ergosterol. This chain is Squalene synthase ERG9, found in Candida albicans (Yeast).